Here is a 506-residue protein sequence, read N- to C-terminus: ATP synthase subunit alpha (506 aa).

170–177 (GDRQTGKT) provides a ligand contact to ATP.

The protein belongs to the ATPase alpha/beta chains family. As to quaternary structure, F-type ATPases have 2 components, CF(1) - the catalytic core - and CF(0) - the membrane proton channel. CF(1) has five subunits: alpha(3), beta(3), gamma(1), delta(1), epsilon(1). CF(0) has four main subunits: a(1), b(1), b'(1) and c(9-12).

Its subcellular location is the cellular thylakoid membrane. The catalysed reaction is ATP + H2O + 4 H(+)(in) = ADP + phosphate + 5 H(+)(out). Produces ATP from ADP in the presence of a proton gradient across the membrane. The alpha chain is a regulatory subunit. The protein is ATP synthase subunit alpha of Synechococcus sp. (strain JA-2-3B'a(2-13)) (Cyanobacteria bacterium Yellowstone B-Prime).